A 712-amino-acid polypeptide reads, in one-letter code: Diacylglycerol kinase 2 (712 aa).

2 Phorbol-ester/DAG-type zinc fingers span residues 72-133 (HHQW…AKDC) and 145-208 (RHHW…GDAC). Positions 338-479 (PDARPLLVFI…RWSVKIVEES (142 aa)) constitute a DAGKc domain.

Belongs to the eukaryotic diacylglycerol kinase family. Monomer. In terms of tissue distribution, expressed in rosette and cauline leaves, flowers, siliques and roots. Highly expressed in young leaves and at lower levels in older leaves. In young seedlings, expressed at the root-shoot junction zone and vascular bundles of the cotyledons. In older plants, expressed in root tip, central cylinder, root hair, leaf mesophyll cells and guard cells, sepals, filaments of the anthers, stigma, valves of young and early adult siliques and hilum of seeds.

It localises to the endoplasmic reticulum. It carries out the reaction a 1,2-diacyl-sn-glycerol + ATP = a 1,2-diacyl-sn-glycero-3-phosphate + ADP + H(+). The catalysed reaction is 1-octadecanoyl-2-(5Z,8Z,11Z,14Z-eicosatetraenoyl)-sn-glycerol + ATP = 1-octadecanoyl-2-(5Z,8Z,11Z,14Z-eicosatetraenoyl)-sn-glycero-3-phosphate + ADP + H(+). It catalyses the reaction 1,2-di-(9Z-octadecenoyl)-sn-glycerol + ATP = 1,2-di-(9Z-octadecenoyl)-sn-glycero-3-phosphate + ADP + H(+). In terms of biological role, phosphorylates the second messenger diacylglycerol (DAG) to generate phosphatidic acid (PA), another important signaling molecule. PA is required for plant development and responses to abiotic stress and pathogen attack. May be involved in the accumulation of PA during cold stress. Involved in response to freezing stress by modulating the accumulation of PA. Exhibits high specificity for the unsaturated DAG analogs 1-stearoyl-2-arachidonoyl-sn-glycerol (1,2-SAG) and 1,2-dioleoyl-sn-glycerol (1,2-DOG). Exhibits high specificity for 1-palmitoyl, 2-oleoyl-sn-glycerol (1,2 POG), 1-stearoyl, 2-linoleoyl-sn-glycerol (1,2-SLG) and 1-oleoyl, 2-palmitoyl-sn-glycerol (1,2-OPG). Has almost no activity toward 1,2-dioctanoyl-sn-glycerol (1,2-DOCG), 1,2-dipalmitoyl-sn-glycerol (1,2-DPG), 1,2-dimyristoyl-sn-glycerol (1,2-DMG) and 1-oleoyl-2-acetyl-sn-glycerol (1,2-OAG). Functions together with DGK4 in male gametophyte development and biosynthesis of phosphatidylglycerol and phosphatidylinositol in the endoplasmic reticulum (ER). Involved in PA production for pollen grain growth, as well as leaf and root growth. The sequence is that of Diacylglycerol kinase 2 from Arabidopsis thaliana (Mouse-ear cress).